Reading from the N-terminus, the 220-residue chain is UPF0319 protein YccT (220 aa).

The first 20 residues, 1 to 20 (MKTGALATFLALCLPVTVFA), serve as a signal peptide directing secretion.

It belongs to the UPF0319 family.

The protein is UPF0319 protein YccT of Salmonella agona (strain SL483).